Consider the following 138-residue polypeptide: Acidic phospholipase A2 PePLA2 (138 aa).

An N-terminal signal peptide occupies residues 1 to 16 (MRTLWIMAVLLLGVEG). Intrachain disulfides connect Cys-42-Cys-131, Cys-44-Cys-60, Cys-59-Cys-110, Cys-65-Cys-138, Cys-66-Cys-103, Cys-73-Cys-97, and Cys-91-Cys-101. Residues Tyr-43, Gly-45, and Gly-47 each coordinate Ca(2+). His-63 is an active-site residue. Asp-64 lines the Ca(2+) pocket. Asp-104 is an active-site residue.

This sequence belongs to the phospholipase A2 family. Group II subfamily. D49 sub-subfamily. It depends on Ca(2+) as a cofactor. As to expression, expressed by the venom gland.

Its subcellular location is the secreted. The enzyme catalyses a 1,2-diacyl-sn-glycero-3-phosphocholine + H2O = a 1-acyl-sn-glycero-3-phosphocholine + a fatty acid + H(+). Its function is as follows. PLA2 catalyzes the calcium-dependent hydrolysis of the 2-acyl groups in 3-sn-phosphoglycerides. This chain is Acidic phospholipase A2 PePLA2, found in Protobothrops elegans (Elegant pitviper).